The primary structure comprises 614 residues: MGSPAAGWGAAPAKRARREGSAESSCGSPADRDPRLWDTERLCQHLSRNGVGEPGLLRRFRESGVTGAMLLDLPACALRITHACLPDERLKVLACLNQLRQTADIMKVFNDPVHGHIEIHPLLVRIIDTPQFQRLRYIKQLGGTYFVFPGASHNRFEHSLGVGYLAGCLVRELKERQPELDITQRDILCVEIAGLCHDLGHGPFSHMFDGRFIPLARQGLNWKHETASVEMFEHLITSNKLEEIMESYGLILEEDIAFIKEQIGGPIDETACEESWPYRGRPKEKSFLYEIVANKKNGIDVDKWDYFARDCHHLGIQNNFDYRRLIKFTRVCEAGNQKHICARDKEVGNLYDMFHTRNCLHRRAYQHKVGNIIEIMITEAFQKADCFFQIEGSKGKLYHISTAMEDMEAYTKLTDNIYLEILHSSRPELSEAREILHKIERRELYKFLGETQPEKVNEIPKDEYDGLAGDIANSKPEKDPPDVELTAEDFIVDVVNMDYGMKDQNPIDNVLFYCKADPSKAIKISKEQVSRLLPGTFSEQVIRVYCKRQDPIIVSAAKQYFVQWCIKRDFTKPQDGDVVAPHLTPLKQSWNNRSKTEYTTASEPSCKQKLSFNK.

The segment covering 1-13 (MGSPAAGWGAAPA) has biased composition (low complexity). Residues 1–33 (MGSPAAGWGAAPAKRARREGSAESSCGSPADRD) form a disordered region. The SAM domain occupies 37–102 (WDTERLCQHL…LACLNQLRQT (66 aa)). The GTP site is built by Lys107 and Val108. Asn110 is a dGTP binding site. GTP-binding residues include Asp128, Gln133, and Arg136. The dGTP site is built by Gln140, Leu141, Val147, and Arg155. Gln140 provides a ligand contact to dATP. Gln140 is a binding site for dCTP. Gln140 provides a ligand contact to dTTP. Residue Arg155 participates in dATP binding. Arg155 contacts dCTP. A dTTP-binding site is contributed by Arg155. One can recognise an HD domain in the interval 155-307 (RFEHSLGVGY…GIDVDKWDYF (153 aa)). 3 residues coordinate Mn(2+): His158, His197, and Asp198. The dATP site is built by His201 and His206. The dCTP site is built by His201 and His206. DTTP is bound by residues His201 and His206. Residue His224 is part of the active site. Asp302 lines the Mn(2+) pocket. Positions 303, 306, 310, 324, 343, 345, 349, 357, 365, 366, 367, and 368 each coordinate dGTP. Residues Lys303, Tyr306, and Asp310 each contribute to the dATP site. Lys303, Tyr306, and Asp310 together coordinate dCTP. DTTP-binding residues include Lys303, Tyr306, and Asp310. Arg357 is a dATP binding site. Arg357 contacts dCTP. Gln366 serves as a coordination point for dATP. Residue Gln366 participates in dCTP binding. Position 366 (Gln366) interacts with dTTP. The GTP site is built by Arg442, Lys446, and Lys515. Lys515 contacts dGTP.

This sequence belongs to the SAMHD1 family. In terms of assembly, homodimer; in absence of GTP and dNTP. Homotetramer; in GTP- and dNTP-bound form. Interacts with rbbp8/CtIP. Zn(2+) is required as a cofactor.

It is found in the nucleus. It localises to the chromosome. It carries out the reaction a 2'-deoxyribonucleoside 5'-triphosphate + H2O = a 2'-deoxyribonucleoside + triphosphate + H(+). The enzyme catalyses dATP + H2O = 2'-deoxyadenosine + triphosphate + H(+). It catalyses the reaction dCTP + H2O = 2'-deoxycytidine + triphosphate + H(+). The catalysed reaction is dGTP + H2O = 2'-deoxyguanosine + triphosphate + H(+). It carries out the reaction dTTP + H2O = thymidine + triphosphate + H(+). Allosterically activated and regulated via the combined actions of GTP and dNTPs (dATP, dGTP, dTTP and dCTP): Allosteric site 1 binds GTP, while allosteric site 2 binds dNTP. Allosteric activation promotes the formation of highly active homotetramers. Its function is as follows. Protein that acts both as a host restriction factor involved in defense response to virus and as a regulator of DNA end resection at stalled replication forks. Has deoxynucleoside triphosphate (dNTPase) activity, which is required to restrict infection by viruses: dNTPase activity reduces cellular dNTP levels to levels too low for retroviral reverse transcription to occur, blocking early-stage virus replication in dendritic and other myeloid cells. Functions during S phase at stalled DNA replication forks to promote the resection of gapped or reversed forks: acts by stimulating the exonuclease activity of MRE11, activating the ATR-CHK1 pathway and allowing the forks to restart replication. Its ability to promote degradation of nascent DNA at stalled replication forks is required to prevent induction of type I interferons, thereby preventing chronic inflammation. Ability to promote DNA end resection at stalled replication forks is independent of dNTPase activity. This chain is Deoxynucleoside triphosphate triphosphohydrolase SAMHD1, found in Gallus gallus (Chicken).